The primary structure comprises 603 residues: Palladin (603 aa).

The interaction with VASP stretch occupies residues 63 to 67 (FPPPP). Residue serine 133 is modified to Phosphoserine. A disordered region spans residues 134–156 (PPTPAALLSPTKEPPPLLAKPKL). Threonine 136 bears the Phosphothreonine mark. Phosphoserine is present on residues serine 142, serine 170, serine 256, and serine 261. The region spanning 278 to 362 (PFFEMKLKHY…MAANTQGRVS (85 aa)) is the Ig-like C2-type 1 domain. The segment at 373–402 (NQRGRSPRSPPGHPHARRPRSRSRDSGDEN) is disordered. Serine 378, serine 381, and serine 393 each carry phosphoserine. At serine 395 the chain carries Phosphoserine; by PKB/AKT1. Phosphoserine is present on serine 398. Ig-like C2-type domains lie at 412–503 (PHFL…LVVA) and 511–601 (PVFI…ARLD). Interaction with EZR regions lie at residues 414–503 (FLQA…LVVA) and 513–603 (FIEK…LDVY). Cysteine 433 and cysteine 485 are joined by a disulfide.

The protein belongs to the myotilin/palladin family. Interacts with EPS8. Interacts with LASP1. Interacts with VASP. Interacts with ACTN. Interacts with SORBS2. Interacts with PFN1. Interacts with LPP. Interacts with SPIN90. Interacts with SRC. Interacts with EZR. Interacts with RAI14. Phosphorylated predominantly on serines and, to a lesser extent, on tyrosines. Phosphorylation at Ser-395 by PKB/AKT1 modulates cytoskeletal organization and cell motility. In adult central nervous system is detected in the brain and spinal cord, specially in the olfactory bulb, cerebral and cerebellar cortices, hippocampus, amygdala, superior colluculus, and superficial laminae of the spinal dorsal horn.

It is found in the cytoplasm. The protein resides in the cytoskeleton. It localises to the cell junction. The protein localises to the focal adhesion. Its subcellular location is the myofibril. It is found in the sarcomere. The protein resides in the z line. It localises to the cell projection. The protein localises to the ruffle. Its subcellular location is the podosome. It is found in the lamellipodium. The protein resides in the axon. It localises to the growth cone. Functionally, cytoskeletal protein required for organization of normal actin cytoskeleton. Roles in establishing cell morphology, motility, cell adhesion and cell-extracellular matrix interactions in a variety of cell types. May function as a scaffolding molecule with the potential to influence both actin polymerization and the assembly of existing actin filaments into higher-order arrays. Binds to proteins that bind to either monomeric or filamentous actin. Localizes at sites where active actin remodeling takes place, such as lamellipodia and membrane ruffles. Different isoforms may have functional differences. Plays a role in neurite outgrowth and in the establishment of polarity during neuronal morphogenesis. Participates in the acquisition of the reactive astrocyte morphology. The sequence is that of Palladin (Palld) from Rattus norvegicus (Rat).